The chain runs to 364 residues: WAT1-related protein At5g47470 (364 aa).

Transmembrane regions (helical) follow at residues 28–48 (MVIV…SLLM), 59–79 (FTIV…FAIL), 93–113 (LIGK…SLFL), 124–144 (ATAM…IVGL), 158–178 (ILGT…HSTS), 197–217 (VVGC…VVLQ), 228–248 (ISLS…VLLL), 255–275 (VLAS…LAGA), 293–313 (PVFV…FAVL), and 319–339 (VSLG…LVLW). The region spanning 40–172 (VYAGNSLLMS…LCVFGALAMS (133 aa)) is the EamA 1 domain. An EamA 2 domain is found at 219–338 (STLAEFPAPI…LMFVGLYLVL (120 aa)).

It belongs to the drug/metabolite transporter (DMT) superfamily. Plant drug/metabolite exporter (P-DME) (TC 2.A.7.4) family.

It is found in the membrane. The sequence is that of WAT1-related protein At5g47470 from Arabidopsis thaliana (Mouse-ear cress).